The primary structure comprises 313 residues: Ribosomal RNA small subunit methyltransferase H (313 aa).

S-adenosyl-L-methionine contacts are provided by residues 35-37 (GGH), aspartate 55, phenylalanine 79, aspartate 101, and glutamine 108.

It belongs to the methyltransferase superfamily. RsmH family.

The protein localises to the cytoplasm. It catalyses the reaction cytidine(1402) in 16S rRNA + S-adenosyl-L-methionine = N(4)-methylcytidine(1402) in 16S rRNA + S-adenosyl-L-homocysteine + H(+). Functionally, specifically methylates the N4 position of cytidine in position 1402 (C1402) of 16S rRNA. The protein is Ribosomal RNA small subunit methyltransferase H of Escherichia coli O139:H28 (strain E24377A / ETEC).